A 374-amino-acid chain; its full sequence is Chaperone protein DnaJ (374 aa).

Residues 4 to 68 form the J domain; sequence DYYDILGVSR…ETRARYDRFG (65 aa). The segment at 133-215 adopts a CR-type zinc-finger fold; the sequence is GGEKQIRITH…CGGNGQAQVT (83 aa). The Zn(2+) site is built by C146, C149, C163, C166, C189, C192, C203, and C206. 4 CXXCXGXG motif repeats span residues 146–153, 163–170, 189–196, and 203–210; these read CTTCNGSG, CGTCGGAG, CPTCNGKG, and CETCGGNG.

It belongs to the DnaJ family. As to quaternary structure, homodimer. The cofactor is Zn(2+).

It is found in the cytoplasm. In terms of biological role, participates actively in the response to hyperosmotic and heat shock by preventing the aggregation of stress-denatured proteins and by disaggregating proteins, also in an autonomous, DnaK-independent fashion. Unfolded proteins bind initially to DnaJ; upon interaction with the DnaJ-bound protein, DnaK hydrolyzes its bound ATP, resulting in the formation of a stable complex. GrpE releases ADP from DnaK; ATP binding to DnaK triggers the release of the substrate protein, thus completing the reaction cycle. Several rounds of ATP-dependent interactions between DnaJ, DnaK and GrpE are required for fully efficient folding. Also involved, together with DnaK and GrpE, in the DNA replication of plasmids through activation of initiation proteins. In Cyanothece sp. (strain PCC 7425 / ATCC 29141), this protein is Chaperone protein DnaJ.